The chain runs to 287 residues: GTPase Era (287 aa).

The Era-type G domain occupies 6–178 (FSGTSVIIGK…IQNKLKIVPK (173 aa)). Positions 14–21 (GKPNVGKS) are G1. Residue 14–21 (GKPNVGKS) participates in GTP binding. Residues 40–44 (HTTQS) are G2. Residues 62–65 (DTPG) are G3. GTP is bound by residues 62–66 (DTPGI) and 124–127 (NKID). A G4 region spans residues 124 to 127 (NKID). Residues 154-156 (ISG) are G5. The 76-residue stretch at 207-282 (LGDELPYSIQ…SIYLSLKVIK (76 aa)) folds into the KH type-2 domain.

Belongs to the TRAFAC class TrmE-Era-EngA-EngB-Septin-like GTPase superfamily. Era GTPase family. As to quaternary structure, monomer.

Its subcellular location is the cytoplasm. It localises to the cell membrane. Its function is as follows. An essential GTPase that binds both GDP and GTP, with rapid nucleotide exchange. Plays a role in 16S rRNA processing and 30S ribosomal subunit biogenesis and possibly also in cell cycle regulation and energy metabolism. This Buchnera aphidicola subsp. Baizongia pistaciae (strain Bp) protein is GTPase Era.